Here is a 407-residue protein sequence, read N- to C-terminus: Probable beta-1,3-galactosyltransferase 4 (407 aa).

The chain crosses the membrane as a helical; Signal-anchor for type II membrane protein span at residues 23–39 (WTLFLCIGFFCAGILFS).

It belongs to the glycosyltransferase 31 family. Mn(2+) is required as a cofactor.

The protein resides in the golgi apparatus membrane. It participates in protein modification; protein glycosylation. In terms of biological role, beta-1,3-galactosyltransferase that transfers galactose from UDP-galactose to substrates with a terminal glycosyl residue. This is Probable beta-1,3-galactosyltransferase 4 (B3GALT4) from Arabidopsis thaliana (Mouse-ear cress).